Consider the following 175-residue polypeptide: Large ribosomal subunit protein uL30 (175 aa).

It belongs to the universal ribosomal protein uL30 family. In terms of assembly, part of the 50S ribosomal subunit.

This is Large ribosomal subunit protein uL30 from Pyrobaculum neutrophilum (strain DSM 2338 / JCM 9278 / NBRC 100436 / V24Sta) (Thermoproteus neutrophilus).